A 419-amino-acid chain; its full sequence is Tyrosine--tRNA ligase (419 aa).

Y34 serves as a coordination point for L-tyrosine. Residues 39 to 48 carry the 'HIGH' region motif; the sequence is PSGDSMHIGH. Residues Y168 and Q172 each coordinate L-tyrosine. Positions 230-234 match the 'KMSKS' region motif; sequence KFGKS. K233 serves as a coordination point for ATP. An S4 RNA-binding domain is found at 352–418; the sequence is VNLVDWLVTL…GKKKYFLVSY (67 aa).

Belongs to the class-I aminoacyl-tRNA synthetase family. TyrS type 1 subfamily. As to quaternary structure, homodimer.

Its subcellular location is the cytoplasm. The catalysed reaction is tRNA(Tyr) + L-tyrosine + ATP = L-tyrosyl-tRNA(Tyr) + AMP + diphosphate + H(+). Catalyzes the attachment of tyrosine to tRNA(Tyr) in a two-step reaction: tyrosine is first activated by ATP to form Tyr-AMP and then transferred to the acceptor end of tRNA(Tyr). In Listeria innocua serovar 6a (strain ATCC BAA-680 / CLIP 11262), this protein is Tyrosine--tRNA ligase.